The sequence spans 359 residues: Dihydroorotate dehydrogenase (quinone) (359 aa).

Residues 65–69 and Thr89 each bind FMN; that span reads AGLDK. Substrate is bound at residue Lys69. A substrate-binding site is contributed by 114-118; it reads NRLGF. FMN-binding residues include Asn149 and Asn182. Asn182 lines the substrate pocket. Ser185 serves as the catalytic Nucleophile. Asn187 contacts substrate. Residues Lys233 and Thr261 each contribute to the FMN site. Substrate is bound at residue 262 to 263; that stretch reads NT. FMN contacts are provided by residues Gly284, Gly313, and 334 to 335; that span reads YT.

It belongs to the dihydroorotate dehydrogenase family. Type 2 subfamily. In terms of assembly, monomer. The cofactor is FMN.

The protein resides in the cell membrane. The enzyme catalyses (S)-dihydroorotate + a quinone = orotate + a quinol. The protein operates within pyrimidine metabolism; UMP biosynthesis via de novo pathway; orotate from (S)-dihydroorotate (quinone route): step 1/1. Functionally, catalyzes the conversion of dihydroorotate to orotate with quinone as electron acceptor. The polypeptide is Dihydroorotate dehydrogenase (quinone) (Paracidovorax citrulli (strain AAC00-1) (Acidovorax citrulli)).